Here is a 455-residue protein sequence, read N- to C-terminus: Secreted triacylglycerol lipase LIP4 (455 aa).

Residues 1 to 19 (MKLNLFILGLLTLAAHAYA) form the signal peptide. Asparagine 98 is a glycosylation site (N-linked (GlcNAc...) asparagine). Cysteines 115 and 284 form a disulfide. The Nucleophile role is filled by serine 197. An N-linked (GlcNAc...) asparagine glycan is attached at asparagine 230. Residues aspartate 344 and histidine 378 contribute to the active site. Residues cysteine 360 and cysteine 406 are joined by a disulfide bond.

Belongs to the AB hydrolase superfamily. Lipase family. Class Lip subfamily.

It is found in the secreted. The protein localises to the cell wall. The catalysed reaction is a triacylglycerol + H2O = a diacylglycerol + a fatty acid + H(+). It catalyses the reaction a monoacylglycerol + H2O = glycerol + a fatty acid + H(+). The enzyme catalyses a diacylglycerol + H2O = a monoacylglycerol + a fatty acid + H(+). Its function is as follows. Secreted lipase involved in Dandruff and seborrheic dermatitis (D/SD) probably via lipase-mediated breakdown of sebaceous lipids and release of irritating free fatty acids. Has triacylglycerol lipase activity and is able to hydrolyze triolein. Mostly converts monoolein to di- and triolein, while free fatty acids are only produced in low amounts. The chain is Secreted triacylglycerol lipase LIP4 from Malassezia globosa (strain ATCC MYA-4612 / CBS 7966) (Dandruff-associated fungus).